A 24-amino-acid chain; its full sequence is Superoxide dismutase [Cu-Zn] (24 aa).

The protein belongs to the Cu-Zn superoxide dismutase family. In terms of assembly, homodimer. Cu cation is required as a cofactor. Zn(2+) serves as cofactor.

Its subcellular location is the cytoplasm. The catalysed reaction is 2 superoxide + 2 H(+) = H2O2 + O2. Its function is as follows. Destroys radicals which are normally produced within the cells and which are toxic to biological systems. The polypeptide is Superoxide dismutase [Cu-Zn] (sod1) (Aquarana catesbeiana (American bullfrog)).